The chain runs to 338 residues: 1-aminocyclopropane-1-carboxylate deaminase (338 aa).

Lys51 is subject to N6-(pyridoxal phosphate)lysine. Ser78 serves as the catalytic Nucleophile.

Belongs to the ACC deaminase/D-cysteine desulfhydrase family. Homotrimer. Pyridoxal 5'-phosphate serves as cofactor.

The enzyme catalyses 1-aminocyclopropane-1-carboxylate + H2O = 2-oxobutanoate + NH4(+). Functionally, catalyzes a cyclopropane ring-opening reaction, the irreversible conversion of 1-aminocyclopropane-1-carboxylate (ACC) to ammonia and alpha-ketobutyrate. Allows growth on ACC as a nitrogen source. This Paracidovorax citrulli (strain AAC00-1) (Acidovorax citrulli) protein is 1-aminocyclopropane-1-carboxylate deaminase.